The chain runs to 89 residues: Small ribosomal subunit protein uS15 (89 aa).

The protein belongs to the universal ribosomal protein uS15 family. As to quaternary structure, part of the 30S ribosomal subunit. Forms a bridge to the 50S subunit in the 70S ribosome, contacting the 23S rRNA.

Its function is as follows. One of the primary rRNA binding proteins, it binds directly to 16S rRNA where it helps nucleate assembly of the platform of the 30S subunit by binding and bridging several RNA helices of the 16S rRNA. Forms an intersubunit bridge (bridge B4) with the 23S rRNA of the 50S subunit in the ribosome. In Salinispora tropica (strain ATCC BAA-916 / DSM 44818 / JCM 13857 / NBRC 105044 / CNB-440), this protein is Small ribosomal subunit protein uS15.